The primary structure comprises 56 residues: Conotoxin Cal6.41b (56 aa).

The signal sequence occupies residues methionine 1–threonine 23. 3 disulfide bridges follow: cysteine 27–cysteine 41, cysteine 33–cysteine 50, and cysteine 40–cysteine 54.

As to expression, expressed by the venom duct.

The protein resides in the secreted. Functionally, probable neurotoxin. The protein is Conotoxin Cal6.41b of Californiconus californicus (California cone).